We begin with the raw amino-acid sequence, 299 residues long: pH-regulated antigen PRA1 (299 aa).

The N-terminal stretch at 1–15 is a signal peptide; the sequence is MNYLLFCLFFAFSVA. N-linked (GlcNAc...) asparagine glycosylation is found at asparagine 48, asparagine 89, asparagine 135, and asparagine 208. The interval 253-299 is disordered; the sequence is FEDSDSGSDSGASSTASSSHQHTDSNPSATTDANSHCHTHADGEVHC. A compositionally biased stretch (low complexity) spans 259–272; that stretch reads GSDSGASSTASSSH. Residues 278 to 288 are compositionally biased toward polar residues; it reads NPSATTDANSH.

The protein belongs to the ZPS1 family. In terms of assembly, component of a multiprotein complex of 250 kDa composed of at least HYR1, MP65, and PRA1. Interacts with host Integrin alpha-M/beta-2 heterodimer. Also binds human factor H (CFH), CFHR1, plasminogen (PLG), complement C3, and C4BPA. Interacts with ZRT101. Post-translationally, N- and O-glycosylated. The N- and 0-glycosidically linked carbohydrates represent 18 to 20 percent and 3 to 4 percent, respectively, of the molecular mass of PRA1. 0-linked sugar residues may be involved in the interaction with fibrinogen. Contributes highly to the carbohydrate component of the matrix. Treatment with tunicamycin impairs glycosylation.

The protein localises to the secreted. Cell surface protein involved in the host-parasite interaction during candidal infection. With MP65, represents a major component of the biofilm matrix. As a surface protein, binds the two human complement regulators CFH and CFHR1, as well as plasminogen PLG, mediates complement evasion and extra-cellular matrix interaction and/or degradation. As a released protein, enhances complement control in direct vicinity of the yeast and thus generates an additional protective layer which controls host complement attack, assisting the fungus in escaping host surveillance. Binds to host fluid-phase C3 and blocks cleavage of C3 to C3a and C3b, leading to inhibition of complement activation and protection from uptake of C.albicans by human macrophages. Also mediates human complement control and complement evasion through binding to C4BPA, another human complement inhibitor, as well as through binding to host integrin alpha-M/beta-2. Binds zinc from its environment and then reassociates with ZRT1 to acquire this essential metal. The protein is pH-regulated antigen PRA1 of Candida albicans (strain SC5314 / ATCC MYA-2876) (Yeast).